The chain runs to 170 residues: ATP synthase subunit b (170 aa).

A helical membrane pass occupies residues 20–42 (QLLAMLVLLALLKKFALGPLLNI).

It belongs to the ATPase B chain family. In terms of assembly, F-type ATPases have 2 components, F(1) - the catalytic core - and F(0) - the membrane proton channel. F(1) has five subunits: alpha(3), beta(3), gamma(1), delta(1), epsilon(1). F(0) has three main subunits: a(1), b(2) and c(10-14). The alpha and beta chains form an alternating ring which encloses part of the gamma chain. F(1) is attached to F(0) by a central stalk formed by the gamma and epsilon chains, while a peripheral stalk is formed by the delta and b chains.

The protein resides in the cell membrane. Its function is as follows. F(1)F(0) ATP synthase produces ATP from ADP in the presence of a proton or sodium gradient. F-type ATPases consist of two structural domains, F(1) containing the extramembraneous catalytic core and F(0) containing the membrane proton channel, linked together by a central stalk and a peripheral stalk. During catalysis, ATP synthesis in the catalytic domain of F(1) is coupled via a rotary mechanism of the central stalk subunits to proton translocation. In terms of biological role, component of the F(0) channel, it forms part of the peripheral stalk, linking F(1) to F(0). In Bacillus velezensis (strain DSM 23117 / BGSC 10A6 / LMG 26770 / FZB42) (Bacillus amyloliquefaciens subsp. plantarum), this protein is ATP synthase subunit b.